The following is a 123-amino-acid chain: MTGDTEKEQEPSSGEQQLNVLKRIHEILTKHSSTQTEFIPLLYHSLKQISKHPNNSSNSLDAATSSIRHRLKTAKTLLQQDPAAIELVSKTPEQWQLHIQEKKIELEKKTKHLQRLRESIQKQ.

Positions 95-123 (WQLHIQEKKIELEKKTKHLQRLRESIQKQ) form a coiled coil.

Belongs to the Mediator complex subunit 9 family. In terms of assembly, component of the Mediator complex.

It localises to the nucleus. Component of the Mediator complex, a coactivator involved in the regulated transcription of nearly all RNA polymerase II-dependent genes. Mediator functions as a bridge to convey information from gene-specific regulatory proteins to the basal RNA polymerase II transcription machinery. Mediator is recruited to promoters by direct interactions with regulatory proteins and serves as a scaffold for the assembly of a functional preinitiation complex with RNA polymerase II and the general transcription factors. In Kluyveromyces lactis (strain ATCC 8585 / CBS 2359 / DSM 70799 / NBRC 1267 / NRRL Y-1140 / WM37) (Yeast), this protein is Mediator of RNA polymerase II transcription subunit 9 (CSE2).